We begin with the raw amino-acid sequence, 700 residues long: Elongation factor G (700 aa).

The region spanning 8–290 (ERYRNIGISA…AVIDYLPSPV (283 aa)) is the tr-type G domain. Residues 17–24 (AHIDAGKT), 88–92 (DTPGH), and 142–145 (NKMD) contribute to the GTP site.

The protein belongs to the TRAFAC class translation factor GTPase superfamily. Classic translation factor GTPase family. EF-G/EF-2 subfamily.

The protein localises to the cytoplasm. Catalyzes the GTP-dependent ribosomal translocation step during translation elongation. During this step, the ribosome changes from the pre-translocational (PRE) to the post-translocational (POST) state as the newly formed A-site-bound peptidyl-tRNA and P-site-bound deacylated tRNA move to the P and E sites, respectively. Catalyzes the coordinated movement of the two tRNA molecules, the mRNA and conformational changes in the ribosome. The sequence is that of Elongation factor G from Paracidovorax citrulli (strain AAC00-1) (Acidovorax citrulli).